Consider the following 168-residue polypeptide: Small ribosomal subunit protein uS5 (168 aa).

The S5 DRBM domain occupies 11–74; it reads YSEKVVKIDR…ESAKKHLVKI (64 aa).

This sequence belongs to the universal ribosomal protein uS5 family. As to quaternary structure, part of the 30S ribosomal subunit. Contacts proteins S4 and S8.

Its function is as follows. With S4 and S12 plays an important role in translational accuracy. Functionally, located at the back of the 30S subunit body where it stabilizes the conformation of the head with respect to the body. The polypeptide is Small ribosomal subunit protein uS5 (Leptospira interrogans serogroup Icterohaemorrhagiae serovar copenhageni (strain Fiocruz L1-130)).